The chain runs to 241 residues: Large ribosomal subunit protein uL3 (241 aa).

2 disordered regions span residues 139–166 and 209–241; these read VSHR…PGHM and KKPL…KEGA. Position 151 is an N5-methylglutamine (Q151).

The protein belongs to the universal ribosomal protein uL3 family. In terms of assembly, part of the 50S ribosomal subunit. Forms a cluster with proteins L14 and L19. Methylated by PrmB.

One of the primary rRNA binding proteins, it binds directly near the 3'-end of the 23S rRNA, where it nucleates assembly of the 50S subunit. The sequence is that of Large ribosomal subunit protein uL3 from Nitrobacter hamburgensis (strain DSM 10229 / NCIMB 13809 / X14).